We begin with the raw amino-acid sequence, 166 residues long: 6,7-dimethyl-8-ribityllumazine synthase (166 aa).

5-amino-6-(D-ribitylamino)uracil-binding positions include F24, 58-60 (ALE), and 82-84 (AVI). 87-88 (ET) contributes to the (2S)-2-hydroxy-3-oxobutyl phosphate binding site. Catalysis depends on H90, which acts as the Proton donor. N115 is a 5-amino-6-(D-ribitylamino)uracil binding site. R129 is a binding site for (2S)-2-hydroxy-3-oxobutyl phosphate.

Belongs to the DMRL synthase family.

It catalyses the reaction (2S)-2-hydroxy-3-oxobutyl phosphate + 5-amino-6-(D-ribitylamino)uracil = 6,7-dimethyl-8-(1-D-ribityl)lumazine + phosphate + 2 H2O + H(+). It functions in the pathway cofactor biosynthesis; riboflavin biosynthesis; riboflavin from 2-hydroxy-3-oxobutyl phosphate and 5-amino-6-(D-ribitylamino)uracil: step 1/2. Its function is as follows. Catalyzes the formation of 6,7-dimethyl-8-ribityllumazine by condensation of 5-amino-6-(D-ribitylamino)uracil with 3,4-dihydroxy-2-butanone 4-phosphate. This is the penultimate step in the biosynthesis of riboflavin. The sequence is that of 6,7-dimethyl-8-ribityllumazine synthase from Ralstonia pickettii (strain 12J).